Reading from the N-terminus, the 341-residue chain is UDP-N-acetyl-alpha-D-glucosaminouronate 4-epimerase (341 aa).

9 residues coordinate NAD(+): Phe27, Ile28, Asp47, Ala50, Thr51, Gly52, Asp78, Ile79, and Gln98. Residue Ser103 participates in UDP-N-acetyl-alpha-D-galactosamine binding. Residue Thr117 participates in NAD(+) binding. Residues Ser142, Ser143, and Tyr166 each contribute to the UDP-N-acetyl-alpha-D-galactosamine site. NAD(+) contacts are provided by Tyr166 and Lys170. Residue Tyr166 is the Proton acceptor of the active site. Asn195 serves as a coordination point for UDP-N-acetyl-alpha-D-galactosamine. Val196 serves as a coordination point for NAD(+). 6 residues coordinate UDP-N-acetyl-alpha-D-galactosamine: Val210, Tyr225, Asn227, Arg234, Arg299, and Asp302.

It belongs to the NAD(P)-dependent epimerase/dehydratase family. Homodimer. The cofactor is NAD(+).

It catalyses the reaction UDP-2-acetamido-2-deoxy-alpha-D-glucuronate = UDP-2-acetamido-2-deoxy-alpha-D-galacturonate. The enzyme catalyses UDP-N-acetyl-alpha-D-glucosamine = UDP-N-acetyl-alpha-D-galactosamine. The protein operates within bacterial outer membrane biogenesis; LPS O-antigen biosynthesis. Functionally, epimerase required for the biosynthesis of the B-band O antigen of serotype O6 lipopolysaccharide. Catalyzes the reversible epimerization of UDP-N-acetylglucosaminuronic acid (UDP-GlcNAcA) to UDP-N-acetylgalactosaminuronic acid (UDP-GalNAcA). Also catalyzes the reversible epimerization of UDP-N-acetylglucosamine (UDP-GlcNAc) to UDP-N-acetylgalactosamine (UDP-GalNAc). Has very low epimerase activity with UDP-glucose (UDP-Glc) and UDP-galactose (UDP-Gal). This Pseudomonas aeruginosa protein is UDP-N-acetyl-alpha-D-glucosaminouronate 4-epimerase.